The following is a 382-amino-acid chain: MIOREX complex component 5 (382 aa).

Residues 1–12 (MRRTFSQLATRL) constitute a mitochondrion transit peptide.

As to quaternary structure, associates with the mitochondrial ribosome.

The protein resides in the mitochondrion. In terms of biological role, component of MIOREX complexes, large expressome-like assemblies of ribosomes with factors involved in all the steps of post-transcriptional gene expression. The protein is MIOREX complex component 5 of Saccharomyces cerevisiae (strain ATCC 204508 / S288c) (Baker's yeast).